A 368-amino-acid chain; its full sequence is Glycine betaine monooxygenase reductase subunit (368 aa).

In terms of domain architecture, FAD-binding FR-type spans 16–119 (NGRHNVRCVK…HGPVGDFNVI (104 aa)). A 2Fe-2S ferredoxin-type domain is found at 284–368 (LQVEFSNSGK…TPKSHVAIEF (85 aa)). [2Fe-2S] cluster contacts are provided by cysteine 318, cysteine 323, cysteine 326, and cysteine 356.

This sequence in the N-terminal section; belongs to the FAD-binding oxidoreductase type 6 family. As to quaternary structure, monomer. The system is composed of an oxygenase subunit (BmoA) and a reductase subunit (BmoB). Maximal specific activity is obtained when the ratio of BmoA to BmoB is 5:1. FAD serves as cofactor. Requires [2Fe-2S] cluster as cofactor.

It carries out the reaction glycine betaine + NADH + O2 + H(+) = N,N-dimethylglycine + formaldehyde + NAD(+) + H2O. In terms of biological role, involved in degradation of glycine betaine. Part of a Rieske-type oxygenase system that catalyzes the conversion of glycine betaine (GB) to dimethylglycine (DMG). This subunit is the ferredoxin reductase component of the system. NADH is the preferred electron donor. The protein is Glycine betaine monooxygenase reductase subunit of Chromohalobacter salexigens (strain ATCC BAA-138 / DSM 3043 / CIP 106854 / NCIMB 13768 / 1H11).